A 141-amino-acid polypeptide reads, in one-letter code: Transcription antitermination protein NusB (141 aa).

Belongs to the NusB family.

Involved in transcription antitermination. Required for transcription of ribosomal RNA (rRNA) genes. Binds specifically to the boxA antiterminator sequence of the ribosomal RNA (rrn) operons. This Neisseria meningitidis serogroup B (strain ATCC BAA-335 / MC58) protein is Transcription antitermination protein NusB.